The sequence spans 203 residues: dITP/XTP pyrophosphatase (203 aa).

Substrate is bound at residue 8–13 (TANKGK). Residues Glu41 and Asp70 each coordinate Mg(2+). The active-site Proton acceptor is Asp70. Residues Ser71, 153 to 156 (FGYD), Lys176, and 181 to 182 (HR) each bind substrate.

It belongs to the HAM1 NTPase family. Homodimer. Mg(2+) serves as cofactor.

The enzyme catalyses XTP + H2O = XMP + diphosphate + H(+). It carries out the reaction dITP + H2O = dIMP + diphosphate + H(+). The catalysed reaction is ITP + H2O = IMP + diphosphate + H(+). In terms of biological role, pyrophosphatase that catalyzes the hydrolysis of nucleoside triphosphates to their monophosphate derivatives, with a high preference for the non-canonical purine nucleotides XTP (xanthosine triphosphate), dITP (deoxyinosine triphosphate) and ITP. Seems to function as a house-cleaning enzyme that removes non-canonical purine nucleotides from the nucleotide pool, thus preventing their incorporation into DNA/RNA and avoiding chromosomal lesions. The chain is dITP/XTP pyrophosphatase from Listeria monocytogenes serovar 1/2a (strain ATCC BAA-679 / EGD-e).